The sequence spans 432 residues: 3-phosphoshikimate 1-carboxyvinyltransferase (432 aa).

3-phosphoshikimate is bound by residues lysine 22, serine 23, and arginine 27. Residue lysine 22 participates in phosphoenolpyruvate binding. Glycine 96 and arginine 127 together coordinate phosphoenolpyruvate. 3-phosphoshikimate-binding residues include serine 173, serine 174, glutamine 175, serine 201, aspartate 316, asparagine 339, and lysine 343. Phosphoenolpyruvate is bound at residue glutamine 175. Catalysis depends on aspartate 316, which acts as the Proton acceptor. Phosphoenolpyruvate contacts are provided by arginine 347, arginine 391, and lysine 416.

Belongs to the EPSP synthase family. Monomer.

The protein resides in the cytoplasm. It catalyses the reaction 3-phosphoshikimate + phosphoenolpyruvate = 5-O-(1-carboxyvinyl)-3-phosphoshikimate + phosphate. It participates in metabolic intermediate biosynthesis; chorismate biosynthesis; chorismate from D-erythrose 4-phosphate and phosphoenolpyruvate: step 6/7. Its function is as follows. Catalyzes the transfer of the enolpyruvyl moiety of phosphoenolpyruvate (PEP) to the 5-hydroxyl of shikimate-3-phosphate (S3P) to produce enolpyruvyl shikimate-3-phosphate and inorganic phosphate. The polypeptide is 3-phosphoshikimate 1-carboxyvinyltransferase (Haemophilus influenzae (strain ATCC 51907 / DSM 11121 / KW20 / Rd)).